The primary structure comprises 398 residues: MNEQPENLRNFTINFGPQHPAAHGVLRLVLELDGEIVARVDPHIGLLHRGTEKLIEQKTYLQAIPYFDRLDYVAPMNQEHAFCLAAEKLLGIEVPRRGQLIRVLYCEIGRILSHLLNVTTQAMDVGALTPPLWGFEEREKLMVFYERASGSRMHAAFFRVGGVHQDLPQKLVDDIEAWCDPFLKVVDDLDRLLTANRIFKQRNVDIGVVPLKEAWEWGFSGVMVRGSGAAWDLRKSQPYECYAEMDFDIPIGKNGDCYDRYLIRMEEMRQSVRIMRQCIQKLNAPEGKGPVVVEDNKVAPPRRGEMKRSMEALIHHFKLYTEGVHVPAGEVYAAVEAPKGEFGVYLVADGTNKPYKCKIRAPGFAHLQAMDHICRGHLLADVSAILGSLDIVFGEVDR.

Belongs to the complex I 49 kDa subunit family. As to quaternary structure, NDH-1 is composed of 14 different subunits. Subunits NuoB, C, D, E, F, and G constitute the peripheral sector of the complex.

The protein localises to the cell inner membrane. The enzyme catalyses a quinone + NADH + 5 H(+)(in) = a quinol + NAD(+) + 4 H(+)(out). Functionally, NDH-1 shuttles electrons from NADH, via FMN and iron-sulfur (Fe-S) centers, to quinones in the respiratory chain. The immediate electron acceptor for the enzyme in this species is believed to be ubiquinone. Couples the redox reaction to proton translocation (for every two electrons transferred, four hydrogen ions are translocated across the cytoplasmic membrane), and thus conserves the redox energy in a proton gradient. The polypeptide is NADH-quinone oxidoreductase subunit D (Bradyrhizobium diazoefficiens (strain JCM 10833 / BCRC 13528 / IAM 13628 / NBRC 14792 / USDA 110)).